Consider the following 334-residue polypeptide: Dihydroorotate dehydrogenase (quinone) (334 aa).

FMN is bound by residues 59–63 and Thr83; that span reads AGLDK. Residue Lys63 participates in substrate binding. 108–112 contacts substrate; that stretch reads NRMGF. FMN contacts are provided by Asn136 and Asn169. Asn169 contributes to the substrate binding site. Residue Ser172 is the Nucleophile of the active site. Asn174 is a substrate binding site. FMN contacts are provided by Lys214 and Thr242. 243-244 lines the substrate pocket; sequence NT. Residues Gly265, Gly294, and 315-316 each bind FMN; that span reads YS.

Belongs to the dihydroorotate dehydrogenase family. Type 2 subfamily. As to quaternary structure, monomer. FMN is required as a cofactor.

It localises to the cell membrane. The catalysed reaction is (S)-dihydroorotate + a quinone = orotate + a quinol. The protein operates within pyrimidine metabolism; UMP biosynthesis via de novo pathway; orotate from (S)-dihydroorotate (quinone route): step 1/1. Functionally, catalyzes the conversion of dihydroorotate to orotate with quinone as electron acceptor. In Acinetobacter baumannii (strain AB0057), this protein is Dihydroorotate dehydrogenase (quinone).